Here is a 156-residue protein sequence, read N- to C-terminus: Probable succinate transporter subunit YjjB (156 aa).

4 helical membrane passes run 7–27 (WALL…AMVF), 54–74 (FGMN…IIGI), 86–106 (VFTV…TAMI), and 128–148 (FLKA…PGIW).

This sequence belongs to the ThrE exporter (TC 2.A.79) family. The transporter is composed of YjjB and YjjP.

It is found in the cell inner membrane. Functionally, involved in succinate export with YjjP. Both proteins are required for export. In Pectobacterium carotovorum subsp. carotovorum (strain PC1), this protein is Probable succinate transporter subunit YjjB.